Reading from the N-terminus, the 103-residue chain is Co-chaperonin GroES (103 aa).

It belongs to the GroES chaperonin family. As to quaternary structure, heptamer of 7 subunits arranged in a ring. Interacts with the chaperonin GroEL.

The protein resides in the cytoplasm. Functionally, together with the chaperonin GroEL, plays an essential role in assisting protein folding. The GroEL-GroES system forms a nano-cage that allows encapsulation of the non-native substrate proteins and provides a physical environment optimized to promote and accelerate protein folding. GroES binds to the apical surface of the GroEL ring, thereby capping the opening of the GroEL channel. The chain is Co-chaperonin GroES from Trichodesmium erythraeum (strain IMS101).